Reading from the N-terminus, the 127-residue chain is Large ribosomal subunit protein bL21 (127 aa).

It belongs to the bacterial ribosomal protein bL21 family. In terms of assembly, part of the 50S ribosomal subunit. Contacts protein L20.

Its function is as follows. This protein binds to 23S rRNA in the presence of protein L20. This is Large ribosomal subunit protein bL21 from Synechococcus sp. (strain ATCC 27144 / PCC 6301 / SAUG 1402/1) (Anacystis nidulans).